The following is a 363-amino-acid chain: Peptide-N(4)-(N-acetyl-beta-glucosaminyl)asparagine amidase (363 aa).

Zn(2+) is bound by residues Cys-129, Cys-132, Cys-165, and Cys-168. The active-site Nucleophile is the Cys-191. Catalysis depends on residues His-218 and Asp-235. Glu-238 provides a ligand contact to substrate. Residues 325 to 363 are disordered; the sequence is RGKTQETKSESVSAASKSSNRGRESGSADWKAQRGEDGK. The span at 334 to 343 shows a compositional bias: low complexity; sequence ESVSAASKSS. The segment covering 345–363 has biased composition (basic and acidic residues); sequence RGRESGSADWKAQRGEDGK.

The protein belongs to the transglutaminase-like superfamily. PNGase family. Interacts with RAD23 subunit of 26S proteasome. The cofactor is Zn(2+).

It is found in the cytoplasm. The protein resides in the nucleus. The enzyme catalyses Hydrolysis of an N(4)-(acetyl-beta-D-glucosaminyl)asparagine residue in which the glucosamine residue may be further glycosylated, to yield a (substituted) N-acetyl-beta-D-glucosaminylamine and a peptide containing an aspartate residue.. Inhibited by Z-VAD-fmk, a well-known caspase inhibitor. Also inhibited by Man9GlcNAc2-iodoacetoamide. Both molecules inhibit enzyme activity through covalent binding of the carbohydrate to the single Cys-191 residue. Its function is as follows. Specifically deglycosylates the denatured form of N-linked glycoproteins in the cytoplasm and assists their proteasome-mediated degradation. Cleaves the beta-aspartyl-glucosamine (GlcNAc) of the glycan and the amide side chain of Asn, converting Asn to Asp. Prefers proteins containing high-mannose over those bearing complex type oligosaccharides. Can recognize misfolded proteins in the endoplasmic reticulum that are exported to the cytosol to be destroyed and deglycosylate them, while it has no activity toward native proteins. Deglycosylation is a prerequisite for subsequent proteasome-mediated degradation of some, but not all, misfolded glycoproteins. Involved in the formation of free oligosaccharide in cytosol. The sequence is that of Peptide-N(4)-(N-acetyl-beta-glucosaminyl)asparagine amidase (PNG1) from Saccharomyces cerevisiae (strain ATCC 204508 / S288c) (Baker's yeast).